Reading from the N-terminus, the 1000-residue chain is MIVSDNFTSSSNTGADLASSVSENRSHFIAESHYREWVEGSGVAPEIARLNVRSLSGMTPYEYLLYSDEPALRRNDGRLRDTWLKRYAFVEHGGWWCSGIDIKTGKDSLWGCFKGDRPRKDREDKKPIKYEHPPRVATEIFTLKVDRGTWRKIAKRHKVELPETDQGFWEWVLAHPELPIIITEGAKKAGALLTAGYCAIGLPGIYNGYRTPKNDHGEPMRQLRHLIPELDLLAKNNRAIAFCFDQDKKPKTIKAVNGAIQTTGALLEKAGAKVSVITWHQDAKGVDDLIVEHGAKALHNRYKHRKPLAVWEMDNLTDITTQVDLTVDQRYLDIDPRAIPKDAQIIFIKSAKGTGKTEWLGKIVKLAQDDCARVLVLTHRIQLAKELARRLDIDHISELDSSPTGGALGMAMCIDSLHPDSQAHFNFMEWHGAHIVLDEIEQVLGHALGSSTCTQDRAKILETFYNLILYALRTGGKLYCSDADLSPISYELIKYILDGCEFKPFTILNTYKPCLEQQRDLFFYEGNDPRDLLTNLRQAIENGEKTLVFTAAQKTASTYSTQNLESLFREKYPDKRILRIDAESVAEPGHPAYGCIDSLNAILPLYDIVLCSPAVETGVSIDIKDHFDSVWGMGSGVQTVNGFCQGLERLRDNVPRHVWIPKFSPHSNRIANGGYTAKAIARDQHRYAELTHKLIGEHAAECSGLEDSLKPFLWAYCRYAALANRGFGSYREAILNKLLSEGYVQKDLSEIDPALAKDYRDELKAVKDHNYLQERVAISKVENPDDRQYEKLKRQRAKSETERHQERHGKLSRSYGLTVTPELVEKDDDGWYSQLQLEYYLTVGKAFCSARDRAKYDQLQHEGFVFKPDINRRSLSPKIHLLELLNIHQFLKPGVTFTGASLEGFKENCLRYAKPIKWILGRTITDKMSPLEIAQALLGKLDRKLEYKGRFGSRDNRQRVYEAIAPNDQREKVFAHWLQRDQAKLGAVSNPCINRFIQEA.

Residues 787-809 (RQYEKLKRQRAKSETERHQERHG) show a composition bias toward basic and acidic residues. A disordered region spans residues 787-812 (RQYEKLKRQRAKSETERHQERHGKLS).

This is an uncharacterized protein from Picosynechococcus sp. (strain ATCC 27264 / PCC 7002 / PR-6) (Agmenellum quadruplicatum).